Consider the following 262-residue polypeptide: Insulin-like growth factor-binding protein 1 (262 aa).

A signal peptide spans 1–25 (MPEVPAVRAWPLLLSLALQLGAAAG). Positions 28–108 (QPLHCAPCSA…TRGQGACMPA (81 aa)) constitute an IGFBP N-terminal domain. 6 disulfides stabilise this stretch: Cys32-Cys59, Cys35-Cys61, Cys43-Cys62, Cys50-Cys65, Cys72-Cys85, and Cys79-Cys105. Positions 101 to 133 (GQGACMPAPSAEATETKDPAAPETTSPESTEMT) are disordered. Positions 121–131 (APETTSPESTE) are enriched in low complexity. Residues Ser126, Ser129, and Ser147 each carry the phosphoserine modification. Tyr161 carries the phosphotyrosine modification. The region spanning 176–254 (KEPCQRELYK…STAVRGDPKC (79 aa)) is the Thyroglobulin type-1 domain. Cystine bridges form between Cys179-Cys209, Cys220-Cys231, and Cys233-Cys254. Ser245 carries the phosphoserine modification. The Cell attachment site motif lies at 249–251 (RGD).

In terms of assembly, binds equally well IGF1 and IGF2. Interacts with integrin ITGA5:ITGB1. Interacts with VHL; this interaction inhibits HIF1A degradation.

The protein resides in the secreted. Functionally, multifunctional protein that plays a critical role in regulating the availability of IGFs such as IGF1 and IGF2 to their receptors and thereby regulates IGF-mediated cellular processes including cell migration, proliferation, differentiation or apoptosis in a cell-type specific manner. Also plays a positive role in cell migration by interacting with integrin ITGA5:ITGB1 through its RGD motif. Mechanistically, binding to integrins leads to activation of focal adhesion kinase/PTK2 and stimulation of the mitogen-activated protein kinase (MAPK) pathway. Regulates cardiomyocyte apoptosis by suppressing HIF-1alpha/HIF1A degradation through ubiquitination. The chain is Insulin-like growth factor-binding protein 1 (IGFBP1) from Sus scrofa (Pig).